The primary structure comprises 103 residues: c-Myc-binding protein (103 aa).

Belongs to the AMY1 family. Binds via its C-terminal region to the N-terminal region of MYC. Associates with AKAP1/S-AKAP84. Interacts with MYCBPAP. Interacts with CFAP91.

Its subcellular location is the cytoplasm. The protein resides in the nucleus. Functionally, may control the transcriptional activity of MYC. Stimulates the activation of E box-dependent transcription by MYC. The protein is c-Myc-binding protein (Mycbp) of Mus musculus (Mouse).